Reading from the N-terminus, the 420-residue chain is Ammonium transporter Amt2 (420 aa).

Helical transmembrane passes span 34–54 (VFFL…FAML), 71–91 (NMVD…ILCS), 120–140 (SWFF…GGVA), 149–169 (VLIS…LGPW), 180–200 (AGSL…IAAL), 220–240 (IPMA…FNVG), 250–270 (GLVC…ALIA), 273–293 (NDVL…CSGT), 295–315 (VVSP…VPIV), 339–359 (VIGA…AGGV), and 365–385 (IIGA…LAKI).

It belongs to the ammonia transporter channel (TC 1.A.11.2) family. As to quaternary structure, homotrimer. Interacts and forms a complex with GlnK2.

The protein localises to the cell membrane. Functionally, involved in the uptake of ammonium/ammonia (NH(4)(+)/NH(3)). Transport is electrogenic. In Methanocaldococcus jannaschii (strain ATCC 43067 / DSM 2661 / JAL-1 / JCM 10045 / NBRC 100440) (Methanococcus jannaschii), this protein is Ammonium transporter Amt2.